We begin with the raw amino-acid sequence, 784 residues long: Toll-like receptor 2 (784 aa).

Positions methionine 1–glutamate 20 are cleaved as a signal peptide. At glycine 21–arginine 587 the chain is on the extracellular side. Cysteines 31 and 37 form a disulfide. 19 LRR repeats span residues alanine 54–valine 77, asparagine 78–arginine 101, serine 102–serine 125, serine 126–threonine 150, asparagine 151–phenylalanine 175, leucine 176–asparagine 199, isoleucine 200–serine 223, leucine 224–leucine 250, isoleucine 251–glycine 278, valine 279–lysine 308, leucine 309–arginine 337, valine 338–serine 361, leucine 362–serine 388, leucine 389–asparagine 414, leucine 415–lysine 437, methionine 438–glutamine 457, threonine 458–glutamine 478, valine 479–methionine 500, and leucine 501–lysine 524. N-linked (GlcNAc...) asparagine glycosylation occurs at asparagine 115. Asparagine 199 is a glycosylation site (N-linked (GlcNAc...) asparagine). A disulfide bridge connects residues cysteine 353 and cysteine 382. An N-linked (GlcNAc...) asparagine glycan is attached at asparagine 414. A disulfide bridge connects residues cysteine 432 and cysteine 454. Asparagine 442 is a glycosylation site (N-linked (GlcNAc...) asparagine). An LRRCT domain is found at leucine 525–histidine 579. The helical transmembrane segment at threonine 588–leucine 608 threads the bilayer. Residues cysteine 609 to serine 784 are Cytoplasmic-facing. One can recognise a TIR domain in the interval isoleucine 639–isoleucine 782. Lysine 754 is covalently cross-linked (Glycyl lysine isopeptide (Lys-Gly) (interchain with G-Cter in ubiquitin)). Residues tyrosine 761 to leucine 778 carry the ATG16L1-binding motif motif.

The protein belongs to the Toll-like receptor family. In terms of assembly, interacts with LY96, TLR1 and TLR6 (via extracellular domain). TLR2 seems to exist in heterodimers with either TLR1 or TLR6 before stimulation by the ligand. The heterodimers form bigger oligomers in response to their corresponding ligands as well as further heterotypic associations with other receptors such as CD14 and/or CD36. Binds MYD88 (via TIR domain). Interacts with TICAM1. Interacts with CNPY3. Interacts with ATG16L1. Interacts with PPP1R11. Interacts with TICAM2. Interacts with TIRAP. In terms of processing, ubiquitinated at Lys-754 by PPP1R11, leading to its degradation. Deubiquitinated by USP2. Glycosylation of Asn-442 is critical for secretion of the N-terminal ectodomain of TLR2.

The protein resides in the membrane. It is found in the cytoplasmic vesicle. It localises to the phagosome membrane. The protein localises to the membrane raft. Its function is as follows. Cooperates with LY96 to mediate the innate immune response to bacterial lipoproteins and other microbial cell wall components. Cooperates with TLR1 or TLR6 to mediate the innate immune response to bacterial lipoproteins or lipopeptides. Acts via MYD88 and TRAF6, leading to NF-kappa-B activation, cytokine secretion and the inflammatory response. May also promote apoptosis in response to lipoproteins. Forms activation clusters composed of several receptors depending on the ligand, these clusters trigger signaling from the cell surface and subsequently are targeted to the Golgi in a lipid-raft dependent pathway. Forms the cluster TLR2:TLR6:CD14:CD36 in response to diacylated lipopeptides and TLR2:TLR1:CD14 in response to triacylated lipopeptides. In Equus caballus (Horse), this protein is Toll-like receptor 2 (TLR2).